We begin with the raw amino-acid sequence, 257 residues long: Coenzyme F420:L-glutamate ligase (257 aa).

GTP is bound by residues 9-12, 38-39, and K43; these read VPEV and ST. D113 contacts a divalent metal cation. Position 116 (N116) interacts with GTP. A divalent metal cation-binding residues include D154, T155, and E212. A GTP-binding site is contributed by 210–217; it reads TGEGDGGT.

Belongs to the CofE family. As to quaternary structure, homodimer. Mg(2+) is required as a cofactor. Requires Mn(2+) as cofactor. It depends on K(+) as a cofactor.

It catalyses the reaction oxidized coenzyme F420-0 + GTP + L-glutamate = oxidized coenzyme F420-1 + GDP + phosphate + H(+). The catalysed reaction is oxidized coenzyme F420-1 + GTP + L-glutamate = oxidized coenzyme F420-2 + GDP + phosphate + H(+). The protein operates within cofactor biosynthesis; coenzyme F420 biosynthesis. In terms of biological role, catalyzes the GTP-dependent successive addition of two or more gamma-linked L-glutamates to the L-lactyl phosphodiester of 7,8-didemethyl-8-hydroxy-5-deazariboflavin (F420-0) to form coenzyme F420-0-glutamyl-glutamate (F420-2) or polyglutamated F420 derivatives. In Haloarcula marismortui (strain ATCC 43049 / DSM 3752 / JCM 8966 / VKM B-1809) (Halobacterium marismortui), this protein is Coenzyme F420:L-glutamate ligase.